The sequence spans 98 residues: DNA-binding protein Fis (98 aa).

A DNA-binding region (H-T-H motif) is located at residues 74-93; it reads QTRAALMMGINRGTLRKKLK.

It belongs to the transcriptional regulatory Fis family. As to quaternary structure, homodimer.

Activates ribosomal RNA transcription. Plays a direct role in upstream activation of rRNA promoters. This is DNA-binding protein Fis from Pectobacterium atrosepticum (strain SCRI 1043 / ATCC BAA-672) (Erwinia carotovora subsp. atroseptica).